Consider the following 349-residue polypeptide: Paired box protein Pax-4 (349 aa).

The segment at residues 5 to 131 is a DNA-binding region (paired); that stretch reads GLSSVNQLGG…SSINRVLRAL (127 aa). The segment at 8 to 64 is PAI subdomain; that stretch reads SVNQLGGLFVNGRPLPLDTRQQIVQLAIRGMRPCDISRSLKVSNGCVSKILGRYYRT. Residues 83 to 131 form an RED subdomain region; the sequence is AVVARIAQLKDEYPALFAWEIQHQLCTEGLCTQDKAPSVSSINRVLRAL. The homeobox DNA-binding region spans 170–229; the sequence is SHRNRTIFSPGQAEALEKEFQRGQYPDSVARGKLAAATSLPEDTVRVWFSNRRAKWRRQE. The interval 278-349 is transcription repression; that stretch reads FCQLCCGTAP…VPSTHCSNWP (72 aa).

The protein belongs to the paired homeobox family. In terms of tissue distribution, expressed in early pancreas. Later restricted to beta cells. Undetectable in adult islets.

It localises to the nucleus. Its function is as follows. Plays an important role in the differentiation and development of pancreatic islet beta cells. Transcriptional repressor that competes with PAX6 in binding to a common element in the glucagon, insulin and somatostatin promoters. The sequence is that of Paired box protein Pax-4 (Pax4) from Mus musculus (Mouse).